A 263-amino-acid chain; its full sequence is Oxidoreductase UcpA (263 aa).

NAD(+) is bound at residue 10 to 32 (LITGASQGIGEGIARVFARHGAN). A substrate-binding site is contributed by S141. The Proton acceptor role is filled by Y155.

Belongs to the short-chain dehydrogenases/reductases (SDR) family.

This chain is Oxidoreductase UcpA (ucpA), found in Salmonella typhi.